Here is a 311-residue protein sequence, read N- to C-terminus: Ornithine carbamoyltransferase (311 aa).

Carbamoyl phosphate is bound by residues 52-55 (STRT), Gln79, Arg103, and 129-132 (HPVQ). Residues Asn167, Asp226, and 230–231 (SM) contribute to the L-ornithine site. Residues 266–267 (CL) and Arg294 each bind carbamoyl phosphate.

The protein belongs to the aspartate/ornithine carbamoyltransferase superfamily. OTCase family.

It localises to the cytoplasm. It carries out the reaction carbamoyl phosphate + L-ornithine = L-citrulline + phosphate + H(+). The protein operates within amino-acid biosynthesis; L-arginine biosynthesis; L-arginine from L-ornithine and carbamoyl phosphate: step 1/3. Reversibly catalyzes the transfer of the carbamoyl group from carbamoyl phosphate (CP) to the N(epsilon) atom of ornithine (ORN) to produce L-citrulline. The protein is Ornithine carbamoyltransferase of Sorangium cellulosum (strain So ce56) (Polyangium cellulosum (strain So ce56)).